A 581-amino-acid polypeptide reads, in one-letter code: Neither inactivation nor afterpotential protein G (581 aa).

An N-terminal signal peptide occupies residues 1-26 (MGMKFQKILVLAGIVIGFLSIIVVLA). 48–77 (DYVIVGGGTGGSTLTSLLAKNSNGSVLLIE) contributes to the FAD binding site. N-linked (GlcNAc...) asparagine glycans are attached at residues Asn-70, Asn-156, Asn-404, and Asn-464. His-516 serves as the catalytic Proton acceptor.

It belongs to the GMC oxidoreductase family. FAD is required as a cofactor.

It is found in the secreted. Oxidoreductase involved in biosynthesis of 3-hydroxyretinal, a chromophore for rhodopsin Rh1. Not responsible for the initial hydroxylation of the retinal ring but rather acts in a subsequent step in chromophore production. May catalyze the conversion of (3R)-3-hydroxyretinol to the 3S enantiomer. The protein is Neither inactivation nor afterpotential protein G (ninaG) of Drosophila melanogaster (Fruit fly).